A 311-amino-acid chain; its full sequence is Protoheme IX farnesyltransferase (311 aa).

The next 9 membrane-spanning stretches (helical) occupy residues 32 to 52 (VMSL…VVVD), 53 to 73 (PLYG…AGAL), 98 to 118 (ISRG…VFLM), 120 to 140 (VLIN…YIVI), 153 to 173 (IVIG…AATG), 180 to 200 (FLLF…LCLF), 226 to 246 (ILVY…TGYA), 248 to 268 (IIYG…AYRL), and 285 to 305 (FFFS…EFLI).

This sequence belongs to the UbiA prenyltransferase family. Protoheme IX farnesyltransferase subfamily.

The protein resides in the cell inner membrane. The enzyme catalyses heme b + (2E,6E)-farnesyl diphosphate + H2O = Fe(II)-heme o + diphosphate. It participates in porphyrin-containing compound metabolism; heme O biosynthesis; heme O from protoheme: step 1/1. Its function is as follows. Converts heme B (protoheme IX) to heme O by substitution of the vinyl group on carbon 2 of heme B porphyrin ring with a hydroxyethyl farnesyl side group. This is Protoheme IX farnesyltransferase from Bartonella bacilliformis (strain ATCC 35685 / KC583 / Herrer 020/F12,63).